The sequence spans 51 residues: Cytochrome bd ubiquinol oxidase subunit X (51 aa).

At 1–3 the chain is on the cytoplasmic side; that stretch reads MWY. The helical transmembrane segment at 4–26 threads the bilayer; the sequence is FSWLLGLPLAAAFAVLNAMWYEL. Topologically, residues 27–51 are periplasmic; the sequence is MDDRARKRLAADPTAELALEGNKHH.

The protein belongs to the cytochrome ubiquinol oxidase subunit X family. In terms of assembly, may be a subunit of cytochrome ubiquinol oxidase.

It is found in the cell inner membrane. The enzyme catalyses 2 a ubiquinol + O2(in) + 4 H(+)(in) = 2 a ubiquinone + 2 H2O(in) + 4 H(+)(out). The protein operates within energy metabolism; oxidative phosphorylation. Required for correct functioning of cytochrome bd oxidase. This is Cytochrome bd ubiquinol oxidase subunit X (cydX) from Brucella abortus (strain 2308).